Reading from the N-terminus, the 81-residue chain is Extracellular matrix regulatory protein B (81 aa).

Functionally, regulates the biosynthesis of the extracellular matrix and the biofilm formation. May act as an enhancer of biofilm gene expression. Acts in parallel to the pathway that governs SinR derepression. The protein is Extracellular matrix regulatory protein B of Bacillus subtilis (strain 168).